A 437-amino-acid chain; its full sequence is Adenylyltransferase and sulfurtransferase MOCS3 (437 aa).

ATP-binding positions include G82, D103, 110 to 114 (TNLHR), K127, and 171 to 172 (DN). Zn(2+) contacts are provided by C212 and C215. C229 functions as the Glycyl thioester intermediate; for adenylyltransferase activity in the catalytic mechanism. Residues C287 and C290 each coordinate Zn(2+). A Rhodanese domain is found at 337–435 (SNVPHLLVDV…WTHNIDPEFP (99 aa)). The active-site Cysteine persulfide intermediate; for sulfurtransferase activity is the C391.

It in the N-terminal section; belongs to the HesA/MoeB/ThiF family. UBA4 subfamily. The cofactor is Zn(2+).

It is found in the cytoplasm. Its subcellular location is the cytosol. The enzyme catalyses [molybdopterin-synthase sulfur-carrier protein]-C-terminal Gly-Gly + ATP + H(+) = [molybdopterin-synthase sulfur-carrier protein]-C-terminal Gly-Gly-AMP + diphosphate. It catalyses the reaction [molybdopterin-synthase sulfur-carrier protein]-C-terminal Gly-Gly-AMP + S-sulfanyl-L-cysteinyl-[cysteine desulfurase] + AH2 = [molybdopterin-synthase sulfur-carrier protein]-C-terminal-Gly-aminoethanethioate + L-cysteinyl-[cysteine desulfurase] + A + AMP + 2 H(+). It functions in the pathway tRNA modification; 5-methoxycarbonylmethyl-2-thiouridine-tRNA biosynthesis. Its pathway is cofactor biosynthesis; molybdopterin biosynthesis. Plays a central role in 2-thiolation of mcm(5)S(2)U at tRNA wobble positions of cytosolic tRNA(Lys), tRNA(Glu) and tRNA(Gln). Also essential during biosynthesis of the molybdenum cofactor. Acts by mediating the C-terminal thiocarboxylation of sulfur carriers URM1 and MOCS2A. Its N-terminus first activates URM1 and MOCS2A as acyl-adenylates (-COAMP), then the persulfide sulfur on the catalytic cysteine is transferred to URM1 and MOCS2A to form thiocarboxylation (-COSH) of their C-terminus. The reaction probably involves hydrogen sulfide that is generated from the persulfide intermediate and that acts as a nucleophile towards URM1 and MOCS2A. Subsequently, a transient disulfide bond is formed. Does not use thiosulfate as sulfur donor; NFS1 probably acting as a sulfur donor for thiocarboxylation reactions. The polypeptide is Adenylyltransferase and sulfurtransferase MOCS3 (Aedes aegypti (Yellowfever mosquito)).